A 708-amino-acid polypeptide reads, in one-letter code: tRNA(Met) cytidine acetyltransferase TmcA (708 aa).

Residues Gln-189, 215 to 224, and Arg-357 each bind ATP; that span reads GRGKTSALGL. The N-acetyltransferase domain occupies 398-574; the sequence is PECVEQPERL…YSLLMVRGEH (177 aa). Residues 502–504 and 509–515 each bind acetyl-CoA; these read IAV and QRQGIGS.

This sequence belongs to the RNA cytidine acetyltransferase family. TmcA subfamily.

The protein resides in the cytoplasm. It catalyses the reaction cytidine(34) in elongator tRNA(Met) + acetyl-CoA + ATP + H2O = N(4)-acetylcytidine(34) in elongator tRNA(Met) + ADP + phosphate + CoA + H(+). Catalyzes the formation of N(4)-acetylcytidine (ac(4)C) at the wobble position of tRNA(Met), by using acetyl-CoA as an acetyl donor and ATP (or GTP). The protein is tRNA(Met) cytidine acetyltransferase TmcA of Vibrio cholerae serotype O1 (strain ATCC 39315 / El Tor Inaba N16961).